The following is a 61-amino-acid chain: Probable tautomerase SAV1363 (61 aa).

P2 functions as the Proton acceptor; via imino nitrogen in the catalytic mechanism.

Belongs to the 4-oxalocrotonate tautomerase family.

The sequence is that of Probable tautomerase SAV1363 from Staphylococcus aureus (strain Mu50 / ATCC 700699).